The primary structure comprises 918 residues: Valine--tRNA ligase (918 aa).

Positions 50–60 match the 'HIGH' region motif; that stretch reads PNVTGSLHMGH. A 'KMSKS' region motif is present at residues 548–552; sequence KMSKS. Lys-551 contributes to the ATP binding site. Residues 849–883 adopt a coiled-coil conformation; sequence NDFVNLEALKDRLTKDLKKVNSDIETLNKRISNKN.

The protein belongs to the class-I aminoacyl-tRNA synthetase family. ValS type 1 subfamily. As to quaternary structure, monomer.

The protein localises to the cytoplasm. It catalyses the reaction tRNA(Val) + L-valine + ATP = L-valyl-tRNA(Val) + AMP + diphosphate. Catalyzes the attachment of valine to tRNA(Val). As ValRS can inadvertently accommodate and process structurally similar amino acids such as threonine, to avoid such errors, it has a 'posttransfer' editing activity that hydrolyzes mischarged Thr-tRNA(Val) in a tRNA-dependent manner. This Prochlorococcus marinus subsp. pastoris (strain CCMP1986 / NIES-2087 / MED4) protein is Valine--tRNA ligase.